The primary structure comprises 403 residues: Queuine tRNA-ribosyltransferase catalytic subunit 1 (403 aa).

N-acetylalanine is present on alanine 2. Aspartate 105 (proton acceptor) is an active-site residue. Position 105 to 109 (105 to 109 (DSGGF)) interacts with queuine. Serine 139 carries the phosphoserine modification. Aspartate 159, glutamine 202, and glycine 229 together coordinate queuine. An RNA binding region spans residues 260–266 (GVGYATD). Aspartate 279 serves as the catalytic Nucleophile. The segment at 284 to 288 (TRTAR) is RNA binding; important for wobble base 34 recognition. 4 residues coordinate Zn(2+): cysteine 317, cysteine 319, cysteine 322, and histidine 348.

It belongs to the queuine tRNA-ribosyltransferase family. As to quaternary structure, heterodimer of a catalytic subunit QTRT1 and an accessory subunit QTRT2. It depends on Zn(2+) as a cofactor.

It is found in the cytoplasm. Its subcellular location is the mitochondrion outer membrane. It carries out the reaction guanosine(34) in tRNA + queuine = queuosine(34) in tRNA + guanine. In terms of biological role, catalytic subunit of the queuine tRNA-ribosyltransferase (TGT) that catalyzes the base-exchange of a guanine (G) residue with queuine (Q) at position 34 (anticodon wobble position) in tRNAs with GU(N) anticodons (tRNA-Asp, -Asn, -His and -Tyr), resulting in the hypermodified nucleoside queuosine (7-(((4,5-cis-dihydroxy-2-cyclopenten-1-yl)amino)methyl)-7-deazaguanosine). Catalysis occurs through a double-displacement mechanism. The nucleophile active site attacks the C1' of nucleotide 34 to detach the guanine base from the RNA, forming a covalent enzyme-RNA intermediate. The proton acceptor active site deprotonates the incoming queuine, allowing a nucleophilic attack on the C1' of the ribose to form the product. This chain is Queuine tRNA-ribosyltransferase catalytic subunit 1, found in Rattus norvegicus (Rat).